The sequence spans 441 residues: NADH-quinone oxidoreductase subunit D 1 (441 aa).

This sequence belongs to the complex I 49 kDa subunit family. In terms of assembly, NDH-1 is composed of 14 different subunits. Subunits NuoB, C, D, E, F, and G constitute the peripheral sector of the complex.

Its subcellular location is the cell membrane. It catalyses the reaction a quinone + NADH + 5 H(+)(in) = a quinol + NAD(+) + 4 H(+)(out). NDH-1 shuttles electrons from NADH, via FMN and iron-sulfur (Fe-S) centers, to quinones in the respiratory chain. The immediate electron acceptor for the enzyme in this species is believed to be a menaquinone. Couples the redox reaction to proton translocation (for every two electrons transferred, four hydrogen ions are translocated across the cytoplasmic membrane), and thus conserves the redox energy in a proton gradient. The polypeptide is NADH-quinone oxidoreductase subunit D 1 (Salinispora tropica (strain ATCC BAA-916 / DSM 44818 / JCM 13857 / NBRC 105044 / CNB-440)).